The sequence spans 194 residues: Peptidyl-tRNA hydrolase (194 aa).

Residue Y17 participates in tRNA binding. The active-site Proton acceptor is the H22. Residues F68, N70, and N116 each coordinate tRNA.

Belongs to the PTH family. In terms of assembly, monomer.

It is found in the cytoplasm. The catalysed reaction is an N-acyl-L-alpha-aminoacyl-tRNA + H2O = an N-acyl-L-amino acid + a tRNA + H(+). In terms of biological role, hydrolyzes ribosome-free peptidyl-tRNAs (with 1 or more amino acids incorporated), which drop off the ribosome during protein synthesis, or as a result of ribosome stalling. Functionally, catalyzes the release of premature peptidyl moieties from peptidyl-tRNA molecules trapped in stalled 50S ribosomal subunits, and thus maintains levels of free tRNAs and 50S ribosomes. The chain is Peptidyl-tRNA hydrolase from Shewanella halifaxensis (strain HAW-EB4).